Consider the following 450-residue polypeptide: ATP-dependent protease ATPase subunit HslU (450 aa).

ATP is bound by residues Val-29, 71–76 (GVGKTE), Asp-261, Glu-328, and Arg-400.

This sequence belongs to the ClpX chaperone family. HslU subfamily. As to quaternary structure, a double ring-shaped homohexamer of HslV is capped on each side by a ring-shaped HslU homohexamer. The assembly of the HslU/HslV complex is dependent on binding of ATP.

It is found in the cytoplasm. ATPase subunit of a proteasome-like degradation complex; this subunit has chaperone activity. The binding of ATP and its subsequent hydrolysis by HslU are essential for unfolding of protein substrates subsequently hydrolyzed by HslV. HslU recognizes the N-terminal part of its protein substrates and unfolds these before they are guided to HslV for hydrolysis. This is ATP-dependent protease ATPase subunit HslU from Rickettsia akari (strain Hartford).